The chain runs to 647 residues: DNA mismatch repair protein MutL (647 aa).

The protein belongs to the DNA mismatch repair MutL/HexB family.

In terms of biological role, this protein is involved in the repair of mismatches in DNA. It is required for dam-dependent methyl-directed DNA mismatch repair. May act as a 'molecular matchmaker', a protein that promotes the formation of a stable complex between two or more DNA-binding proteins in an ATP-dependent manner without itself being part of a final effector complex. This is DNA mismatch repair protein MutL from Bacillus thuringiensis (strain Al Hakam).